We begin with the raw amino-acid sequence, 2177 residues long: Brefeldin A-inhibited guanine nucleotide-exchange protein 3 (2177 aa).

A compositionally biased stretch (low complexity) spans 282–295 (TSSTSTSLESDSAS). The tract at residues 282 to 301 (TSSTSTSLESDSASPGVSDH) is disordered. S471 carries the post-translational modification Phosphoserine. Over residues 511–524 (TGQTTLEGELGQTT) the composition is skewed to polar residues. Disordered regions lie at residues 511 to 542 (TGQT…PAIP), 617 to 636 (AAEK…DNCS), and 1031 to 1076 (DGAS…LSTA). Residues 583 to 796 (RTRSYGSRYS…EELYHQVLDR (214 aa)) form the SEC7 domain. The span at 618–627 (AEKDSGRSDV) shows a compositional bias: basic and acidic residues. Phosphoserine occurs at positions 632 and 636. The span at 1032-1047 (GASQPPLTISQPQKAT) shows a compositional bias: polar residues. S1049 is modified (phosphoserine). The chain crosses the membrane as a helical span at residues 1492-1512 (GPGFGIYAVVHLLLPVMSVWL). Disordered stretches follow at residues 1848–1877 (STDS…GKEK), 1946–2004 (ESST…RKKE), and 2033–2064 (KQQH…SPLL). Over residues 1960–1974 (TPSEDDRSQSREHMG) the composition is skewed to basic and acidic residues. The residue at position 1991 (S1991) is a Phosphoserine. Composition is skewed to basic and acidic residues over residues 1993–2004 (KVEKKDPSRKKE) and 2043–2052 (KEVKVEKKGE). S2079, S2081, S2095, S2101, and S2103 each carry phosphoserine. Residues 2082 to 2103 (AGPELLRQDKRPRSGSTGSSLS) are disordered.

As to quaternary structure, interacts with PHB2. Expressed in breast cancer cell lines. Not expressed in normal tissues such as duct, mammary gland, lung, heart, liver, kidnay, bone marrow.

Its subcellular location is the cytoplasm. It localises to the cytoplasmic vesicle. The protein resides in the secretory vesicle. The protein localises to the secretory vesicle membrane. In terms of biological role, participates in the regulation of systemic glucose homeostasis, where it negatively regulates insulin granule biogenesis in pancreatic islet beta cells. Also regulates glucagon granule production in pancreatic alpha cells. Inhibits nuclear translocation of the transcriptional coregulator PHB2 and may enhance estrogen receptor alpha (ESR1) transcriptional activity in breast cancer cells. The protein is Brefeldin A-inhibited guanine nucleotide-exchange protein 3 of Homo sapiens (Human).